Consider the following 775-residue polypeptide: Coiled-coil domain-containing protein R3HCC1L (775 aa).

2 stretches are compositionally biased toward basic and acidic residues: residues 1-16 and 65-112; these read MQQE…KRPD and ESQR…KGAE. 2 disordered regions span residues 1 to 127 and 235 to 262; these read MQQE…HRAP and LSSD…DISV. Residues 7-27 form an EJC-binding motif; may mediate interaction with the EJC region; the sequence is RCRVRTKRPDMALYVPKARRG. A compositionally biased stretch (polar residues) spans 235 to 247; the sequence is LSSDSETAPSSLE. Residue Ser-671 is modified to Phosphoserine. Phosphothreonine is present on Thr-695. A coiled-coil region spans residues 734–766; that stretch reads RSKQSKTEREAELRKLQEARERKRLEAKQREDI. The interval 755-775 is disordered; that stretch reads RKRLEAKQREDIWEGRDQSVV.

As to quaternary structure, may interact with the exon junction complex (EJC) composed at least of CASC3, EIF4A3, MAGOH and RBM8A.

This Mus musculus (Mouse) protein is Coiled-coil domain-containing protein R3HCC1L (R3hcc1l).